The primary structure comprises 144 residues: Small ribosomal subunit protein bS16 (144 aa).

The disordered stretch occupies residues N115–E144.

It belongs to the bacterial ribosomal protein bS16 family.

This Nocardia farcinica (strain IFM 10152) protein is Small ribosomal subunit protein bS16.